The primary structure comprises 453 residues: Probable tRNA methyltransferase 9B (453 aa).

Ser214 bears the Phosphoserine mark.

Belongs to the methyltransferase superfamily.

In terms of biological role, may modify wobble uridines in specific arginine and glutamic acid tRNAs. Acts as a tumor suppressor by promoting the expression of LIN9. This is Probable tRNA methyltransferase 9B (TRMT9B) from Bos taurus (Bovine).